A 393-amino-acid polypeptide reads, in one-letter code: Thermostable carboxypeptidase 1 (393 aa).

Residues His104, Asp109, and His245 each coordinate Zn(2+). The active-site Proton donor is Tyr302. Glu373 acts as the Nucleophile in catalysis.

It belongs to the peptidase M20 family. As to quaternary structure, homotetramer. It depends on Zn(2+) as a cofactor.

Can release basic, acidic, aromatic, and, to a lesser extent, aliphatic amino acids. This chain is Thermostable carboxypeptidase 1 (cpsA1), found in Saccharolobus solfataricus (strain ATCC 35092 / DSM 1617 / JCM 11322 / P2) (Sulfolobus solfataricus).